A 678-amino-acid polypeptide reads, in one-letter code: Beta-catenin-like protein hmp-2 (678 aa).

ARM repeat units lie at residues 153-192, 280-319, 320-359, 362-403, and 409-448; these read RGGPLLIFRSGGLAEIIRMLYDSLESVVHYAVTTLRNLLM, PSNKPALISLGCLPALYVELCTAKDERSQTAILVAMRNLS, DSATNEENLTQLIIKLLEIIRVANDGMTACACGTLSNLTC, TRNK…HCTA, and EEAQSELRFCQAFPVILDQLETLRTPVIKAALGVIRNSAL.

This sequence belongs to the beta-catenin family. As to quaternary structure, component of a core catenin-cadherin complex consisting of hmr-1, hmp-1 and hmp-2; the complex localizes to adherens junctions. Interacts with hmr-1; the interaction is direct. May interact with hmp-1. Interacts with frk-1. In terms of tissue distribution, epidermal cells.

It is found in the cell junction. The protein localises to the adherens junction. Required for cell migration during body enclosure and cell shape changes during body elongation. Plays a role in recruitment of the cadherin protein hmr-1 to adherens junctions. The protein is Beta-catenin-like protein hmp-2 (hmp-2) of Caenorhabditis elegans.